The sequence spans 317 residues: Coproporphyrinogen-III oxidase, aerobic 1 (317 aa).

The segment at 38-47 is important for dimerization; it reads VLRDGAIFEQ. A substrate-binding site is contributed by Ser-82. His-96 serves as the catalytic Proton donor. Residues 98–100 and 269–274 each bind substrate; these read NYR and NGRTES. Residues 251–286 are important for dimerization; the sequence is YVEFNLVYDRGTIFGLQTNGRTESILMSLPPLVRWE.

This sequence belongs to the aerobic coproporphyrinogen-III oxidase family. As to quaternary structure, homodimer.

The protein localises to the cytoplasm. The enzyme catalyses coproporphyrinogen III + O2 + 2 H(+) = protoporphyrinogen IX + 2 CO2 + 2 H2O. It participates in porphyrin-containing compound metabolism; protoporphyrin-IX biosynthesis; protoporphyrinogen-IX from coproporphyrinogen-III (O2 route): step 1/1. Functionally, key enzyme in heme biosynthesis. Catalyzes the oxidative decarboxylation of propionic acid side chains of rings A and B of coproporphyrinogen III. The polypeptide is Coproporphyrinogen-III oxidase, aerobic 1 (Nostoc sp. (strain PCC 7120 / SAG 25.82 / UTEX 2576)).